We begin with the raw amino-acid sequence, 441 residues long: Xaa-Pro dipeptidase (441 aa).

Residues Asp-244, Asp-255, His-336, Glu-381, and Glu-420 each contribute to the Mn(2+) site.

Belongs to the peptidase M24B family. Bacterial-type prolidase subfamily. It depends on Mn(2+) as a cofactor.

The catalysed reaction is Xaa-L-Pro dipeptide + H2O = an L-alpha-amino acid + L-proline. Its function is as follows. Splits dipeptides with a prolyl residue in the C-terminal position. The sequence is that of Xaa-Pro dipeptidase from Xanthomonas campestris pv. campestris (strain 8004).